A 156-amino-acid polypeptide reads, in one-letter code: MSRKGPAPKRDVNPDPIYNSKMVTKFINKLMLDGKKGLSQRIFYKALELVGERTNEEPLEVFETAVKNVMPVLEVKARRVGGATYQVPVEVEPNRKQVLAIRWIVNYARERGERAMSERLAGELIDAYNNTGGAIKKKEDTHKMAEANKAFAHYRW.

The protein belongs to the universal ribosomal protein uS7 family. As to quaternary structure, part of the 30S ribosomal subunit. Contacts proteins S9 and S11.

Its function is as follows. One of the primary rRNA binding proteins, it binds directly to 16S rRNA where it nucleates assembly of the head domain of the 30S subunit. Is located at the subunit interface close to the decoding center, probably blocks exit of the E-site tRNA. The sequence is that of Small ribosomal subunit protein uS7 from Natranaerobius thermophilus (strain ATCC BAA-1301 / DSM 18059 / JW/NM-WN-LF).